The sequence spans 313 residues: Aspartate carbamoyltransferase catalytic subunit (313 aa).

Positions 61 and 62 each coordinate carbamoyl phosphate. Position 89 (lysine 89) interacts with L-aspartate. The carbamoyl phosphate site is built by arginine 111, histidine 139, and glutamine 142. Residues arginine 172 and arginine 227 each coordinate L-aspartate. 2 residues coordinate carbamoyl phosphate: glycine 268 and proline 269.

Belongs to the aspartate/ornithine carbamoyltransferase superfamily. ATCase family. In terms of assembly, heterododecamer (2C3:3R2) of six catalytic PyrB chains organized as two trimers (C3), and six regulatory PyrI chains organized as three dimers (R2).

The enzyme catalyses carbamoyl phosphate + L-aspartate = N-carbamoyl-L-aspartate + phosphate + H(+). Its pathway is pyrimidine metabolism; UMP biosynthesis via de novo pathway; (S)-dihydroorotate from bicarbonate: step 2/3. Functionally, catalyzes the condensation of carbamoyl phosphate and aspartate to form carbamoyl aspartate and inorganic phosphate, the committed step in the de novo pyrimidine nucleotide biosynthesis pathway. The protein is Aspartate carbamoyltransferase catalytic subunit of Gluconobacter oxydans (strain 621H) (Gluconobacter suboxydans).